The primary structure comprises 397 residues: Acetate kinase 2 (397 aa).

Asparagine 10 serves as a coordination point for Mg(2+). Residue lysine 17 coordinates ATP. Arginine 90 lines the substrate pocket. Residue aspartate 147 is the Proton donor/acceptor of the active site. Residues 207–211 (HLGNG), 281–283 (DAR), and 329–333 (GIGEN) each bind ATP. Residue glutamate 385 coordinates Mg(2+).

The protein belongs to the acetokinase family. As to quaternary structure, homodimer. Mg(2+) is required as a cofactor. Requires Mn(2+) as cofactor.

Its subcellular location is the cytoplasm. The catalysed reaction is acetate + ATP = acetyl phosphate + ADP. The protein operates within metabolic intermediate biosynthesis; acetyl-CoA biosynthesis; acetyl-CoA from acetate: step 1/2. Its function is as follows. Catalyzes the formation of acetyl phosphate from acetate and ATP. Can also catalyze the reverse reaction. This is Acetate kinase 2 from Aliivibrio fischeri (strain ATCC 700601 / ES114) (Vibrio fischeri).